The chain runs to 333 residues: MSINVTEIVLHQIHQTEGETSELNTVLRDNLLAISPEVEQMMLQLHQAYQSKAKAYGIFKNESIFAQQLNRLLEQETDFLPFSHSCAKMLSSELAKYPFASGGTFILCRYNFLATDYLFIALIDSRTSMLVDDQLEIKRTEYLDITQYDIACRINLTELKINAQSNRYLTFIKGRVGRKIADFFMDFLSAEEGLNPQLQNQTLLQAVSDYCDQGELSAPQTREVKKQVFEYCKGQINSGEEIALSELSEALPTLNEVDFAQFTQEQEYGLEENIPPVRNALKTLTKYSGSGKGVTISFNADLLGERLIWDELNDTLTIKGLPANLRDQLARNK.

Belongs to the YejK family.

It is found in the cytoplasm. The protein resides in the nucleoid. In Actinobacillus pleuropneumoniae serotype 5b (strain L20), this protein is Nucleoid-associated protein APL_0429.